The chain runs to 285 residues: Transcription factor MYB15 (285 aa).

2 consecutive HTH myb-type domains span residues 9-61 (KMGL…MNYL) and 62-116 (KPDI…KKRL). 2 DNA-binding regions (H-T-H motif) span residues 37–61 (WRALPKQAGLLRCGKSCRLRWMNYL) and 89–112 (WSAIAAKLPGRTDNEIKNVWHTHL). The segment at 115–172 (RLEDYQPAKPKTSNKKKGTKPKSESVITSSNSTRSESELADSSNPSGESLFSTSPSTS) is disordered. Residues 139-158 (SVITSSNSTRSESELADSSN) show a composition bias toward polar residues. Over residues 159 to 172 (PSGESLFSTSPSTS) the composition is skewed to low complexity.

In terms of assembly, interacts with SCRM/ICE1. In terms of tissue distribution, expressed in roots, leaves, stems and flowers. Expressed in stomatal guard cells.

It localises to the nucleus. Its function is as follows. Transcription factor involved in cold-regulation of CBF genes and in the development of freezing tolerance. May be part of a complex network of transcription factors controlling the expression of CBF genes and other genes in response to cold stress. Binds to the MYB recognition sequences in the promoters of CBF1, CBF2 and CBF3 genes. Involved in drought and salt tolerance. May enhance expression levels of genes involved in abscisic acid (ABA) biosynthesis and signaling, as well as those encoding stress-protective proteins. In Arabidopsis thaliana (Mouse-ear cress), this protein is Transcription factor MYB15.